Consider the following 395-residue polypeptide: Flap endonuclease 1 (395 aa).

Residues 1–104 are N-domain; it reads MGIKHLYQII…GELAKRFMRK (104 aa). Asp-34 serves as a coordination point for Mg(2+). Positions 47 and 70 each coordinate DNA. Positions 86, 158, 160, 179, and 181 each coordinate Mg(2+). Positions 122–253 are I-domain; it reads EVEKFSRRTV…NTALKLIRDH (132 aa). Glu-158 is a DNA binding site. DNA contacts are provided by Gly-231 and Asp-233. Residue Asp-233 participates in Mg(2+) binding. The interaction with PCNA stretch occupies residues 341 to 349; that stretch reads QQSRLEGFF. The span at 360–389 shows a compositional bias: basic and acidic residues; the sequence is AVLKRKHEEKLELQKKKKKEDSKAKKEAKS. The interval 360-395 is disordered; sequence AVLKRKHEEKLELQKKKKKEDSKAKKEAKSKPRGTT.

Belongs to the XPG/RAD2 endonuclease family. FEN1 subfamily. In terms of assembly, interacts with PCNA. Three molecules of FEN1 bind to one PCNA trimer with each molecule binding to one PCNA monomer. PCNA stimulates the nuclease activity without altering cleavage specificity. It depends on Mg(2+) as a cofactor. In terms of processing, phosphorylated. Phosphorylation upon DNA damage induces relocalization to the nuclear plasma.

Its subcellular location is the nucleus. The protein resides in the nucleolus. It is found in the nucleoplasm. The protein localises to the mitochondrion. Functionally, structure-specific nuclease with 5'-flap endonuclease and 5'-3' exonuclease activities involved in DNA replication and repair. During DNA replication, cleaves the 5'-overhanging flap structure that is generated by displacement synthesis when DNA polymerase encounters the 5'-end of a downstream Okazaki fragment. It enters the flap from the 5'-end and then tracks to cleave the flap base, leaving a nick for ligation. Also involved in the long patch base excision repair (LP-BER) pathway, by cleaving within the apurinic/apyrimidinic (AP) site-terminated flap. Acts as a genome stabilization factor that prevents flaps from equilibrating into structures that lead to duplications and deletions. Also possesses 5'-3' exonuclease activity on nicked or gapped double-stranded DNA, and exhibits RNase H activity. Also involved in replication and repair of rDNA and in repairing mitochondrial DNA. This Ajellomyces capsulatus (strain H143) (Darling's disease fungus) protein is Flap endonuclease 1.